A 348-amino-acid chain; its full sequence is Serine/threonine-protein kinase SBK2 (348 aa).

The disordered stretch occupies residues 1 to 25 (MPGKQSEEGPAEAGASEDSEEEGLG). A Protein kinase domain is found at 62–330 (YEEVRPLGQG…IREHLGRPWR (269 aa)). Residues 68–76 (LGQGCYGRV) and K91 contribute to the ATP site. The Proton acceptor role is filled by D183.

This sequence belongs to the protein kinase superfamily. Ser/Thr protein kinase family. STKL subfamily.

It catalyses the reaction L-seryl-[protein] + ATP = O-phospho-L-seryl-[protein] + ADP + H(+). The catalysed reaction is L-threonyl-[protein] + ATP = O-phospho-L-threonyl-[protein] + ADP + H(+). In Homo sapiens (Human), this protein is Serine/threonine-protein kinase SBK2 (SBK2).